Consider the following 375-residue polypeptide: 23S rRNA (uracil(747)-C(5))-methyltransferase RlmC (375 aa).

Cys3, Cys11, Cys14, and Cys87 together coordinate [4Fe-4S] cluster. Gln212, Phe241, Glu262, and Asn307 together coordinate S-adenosyl-L-methionine. Cys334 acts as the Nucleophile in catalysis.

This sequence belongs to the class I-like SAM-binding methyltransferase superfamily. RNA M5U methyltransferase family. RlmC subfamily.

It catalyses the reaction uridine(747) in 23S rRNA + S-adenosyl-L-methionine = 5-methyluridine(747) in 23S rRNA + S-adenosyl-L-homocysteine + H(+). Its function is as follows. Catalyzes the formation of 5-methyl-uridine at position 747 (m5U747) in 23S rRNA. This chain is 23S rRNA (uracil(747)-C(5))-methyltransferase RlmC, found in Escherichia coli O9:H4 (strain HS).